Consider the following 464-residue polypeptide: Glycine--tRNA ligase (464 aa).

Substrate is bound by residues Arg-104 and Glu-175. Residues 207-209 (RNE), 217-222 (FRTREF), 292-293 (EL), and 336-339 (GVNR) each bind ATP. 222–226 (FEQME) is a substrate binding site. 332-336 (EPALG) is a substrate binding site.

This sequence belongs to the class-II aminoacyl-tRNA synthetase family. As to quaternary structure, homodimer.

It localises to the cytoplasm. It catalyses the reaction tRNA(Gly) + glycine + ATP = glycyl-tRNA(Gly) + AMP + diphosphate. In terms of biological role, catalyzes the attachment of glycine to tRNA(Gly). This is Glycine--tRNA ligase from Leptospira borgpetersenii serovar Hardjo-bovis (strain JB197).